The primary structure comprises 377 residues: uncharacterized protein (377 aa).

Composition is skewed to polar residues over residues 1-11 and 31-43; these read MSSIQGTSGSS and PSGQ…AVGK. 3 disordered regions span residues 1–43, 109–141, and 328–377; these read MSSI…AVGK, SSEE…IARN, and SSSP…RGFQ. The segment covering 334–345 has biased composition (basic and acidic residues); it reads EDPRSLRDRLRD.

Belongs to the chlamydial CPn_0499/CT_392/TC_0671 family.

This is an uncharacterized protein from Chlamydia trachomatis serovar D (strain ATCC VR-885 / DSM 19411 / UW-3/Cx).